The primary structure comprises 235 residues: Cytidylate kinase (235 aa).

16-24 (GPAASGKST) provides a ligand contact to ATP.

The protein belongs to the cytidylate kinase family. Type 1 subfamily.

It localises to the cytoplasm. The catalysed reaction is CMP + ATP = CDP + ADP. The enzyme catalyses dCMP + ATP = dCDP + ADP. The protein is Cytidylate kinase of Chloroherpeton thalassium (strain ATCC 35110 / GB-78).